We begin with the raw amino-acid sequence, 501 residues long: TGF-beta receptor type-1 (501 aa).

Residues 1-29 (MEAASAALRRCLLLIVLVAAATLLPGAKA) form the signal peptide. The Extracellular portion of the chain corresponds to 30–124 (LQCFCHLCTK…QSAGLGPVEL (95 aa)). Disulfide bonds link C32/C50, C34/C37, C44/C67, C82/C94, and C95/C100. N41 is a glycosylation site (N-linked (GlcNAc...) asparagine). The chain crosses the membrane as a helical span at residues 125–145 (AAVIAGPVCFVCIALMLMVYI). Residues 146-501 (CHNRTVIHHR…QLSQQEGIKM (356 aa)) are Cytoplasmic-facing. A Phosphoserine modification is found at S163. One can recognise a GS domain in the interval 173–202 (TTLKDLIYDMTTSGSGSGLPLLVQRTIART). 2 positions are modified to phosphothreonine; by TGFBR2: T183 and T184. 3 positions are modified to phosphoserine; by TGFBR2: S185, S187, and S189. The FKBP1A-binding signature appears at 191 to 192 (LP). A Protein kinase domain is found at 203–493 (IVLQESIGKG…LRIKKTLSQL (291 aa)). ATP contacts are provided by residues 209–217 (IGKGRFGEV) and K230. The active-site Proton acceptor is the D331. Residue K389 forms a Glycyl lysine isopeptide (Lys-Gly) (interchain with G-Cter in SUMO) linkage.

This sequence belongs to the protein kinase superfamily. TKL Ser/Thr protein kinase family. TGFB receptor subfamily. In terms of assembly, homodimer; in the endoplasmic reticulum but also at the cell membrane. Heterohexamer; TGFB1, TGFB2 and TGFB3 homodimeric ligands assemble a functional receptor composed of two TGFBR1 and TGFBR2 heterodimers to form a ligand-receptor heterohexamer. The respective affinity of TGBRB1 and TGFBR2 for the ligands may modulate the kinetics of assembly of the receptor and may explain the different biological activities of TGFB1, TGFB2 and TGFB3. Component of a complex composed of TSC22D1 (via N-terminus), TGFBR1 and TGFBR2; the interaction between TSC22D1 and TGFBR1 is inhibited by SMAD7 and promoted by TGFB1. Interacts with CD109; inhibits TGF-beta receptor activation in keratinocytes. Interacts with RBPMS. Interacts with SMAD2, SMAD3 and ZFYVE9; ZFYVE9 recruits SMAD2 and SMAD3 to the TGF-beta receptor. Interacts with TRAF6 and MAP3K7; induces MAP3K7 activation by TRAF6. Interacts with PARD6A; involved in TGF-beta induced epithelial to mesenchymal transition. Interacts with NEDD4L. Interacts with SMAD7, SMURF1 and SMURF2; SMAD7 recruits NEDD4L, SMURF1 and SMURF2 to the TGF-beta receptor. Interacts with USP15 and VPS39. Interacts (unphosphorylated) with FKBP1A; prevents TGFBR1 phosphorylation by TGFBR2 and stabilizes it in the inactive conformation. Interacts with SDCBP (via C-terminus). Interacts with CAV1 and this interaction is impaired in the presence of SDCBP. Interacts with APPL1; interaction is TGF beta dependent; mediates trafficking of the TGFBR1 from the endosomes to the nucleus via microtubules in a TRAF6-dependent manner. Interacts with GPR50; this interaction promotes the constitutive activation of SMAD signaling pathway. The cofactor is Mg(2+). Requires Mn(2+) as cofactor. In terms of processing, phosphorylated at basal levels in the absence of ligand. Activated upon phosphorylation by TGFBR2, mainly in the GS domain. Phosphorylation in the GS domain abrogates FKBP1A-binding. N-Glycosylated. Post-translationally, ubiquitinated; undergoes ubiquitination catalyzed by several E3 ubiquitin ligases including SMURF1, SMURF2 and NEDD4L2. Results in the proteasomal and/or lysosomal degradation of the receptor thereby negatively regulating its activity. Deubiquitinated by USP15, leading to stabilization of the protein and enhanced TGF-beta signal. Its ubiquitination and proteasome-mediated degradation is negatively regulated by SDCBP. Urogenital ridge, testis, ovary, brain and lungs.

The protein localises to the cell membrane. It is found in the cell junction. It localises to the tight junction. Its subcellular location is the membrane raft. The protein resides in the cell surface. The enzyme catalyses L-threonyl-[receptor-protein] + ATP = O-phospho-L-threonyl-[receptor-protein] + ADP + H(+). It carries out the reaction L-seryl-[receptor-protein] + ATP = O-phospho-L-seryl-[receptor-protein] + ADP + H(+). With respect to regulation, kept in an inactive conformation by FKBP1A preventing receptor activation in absence of ligand. CD109 is another inhibitor of the receptor. Functionally, transmembrane serine/threonine kinase forming with the TGF-beta type II serine/threonine kinase receptor, TGFBR2, the non-promiscuous receptor for the TGF-beta cytokines TGFB1, TGFB2 and TGFB3. Transduces the TGFB1, TGFB2 and TGFB3 signal from the cell surface to the cytoplasm and is thus regulating a plethora of physiological and pathological processes including cell cycle arrest in epithelial and hematopoietic cells, control of mesenchymal cell proliferation and differentiation, wound healing, extracellular matrix production, immunosuppression and carcinogenesis. The formation of the receptor complex composed of 2 TGFBR1 and 2 TGFBR2 molecules symmetrically bound to the cytokine dimer results in the phosphorylation and the activation of TGFBR1 by the constitutively active TGFBR2. Activated TGFBR1 phosphorylates SMAD2 which dissociates from the receptor and interacts with SMAD4. The SMAD2-SMAD4 complex is subsequently translocated to the nucleus where it modulates the transcription of the TGF-beta-regulated genes. This constitutes the canonical SMAD-dependent TGF-beta signaling cascade. Also involved in non-canonical, SMAD-independent TGF-beta signaling pathways. For instance, TGFBR1 induces TRAF6 autoubiquitination which in turn results in MAP3K7 ubiquitination and activation to trigger apoptosis. Also regulates epithelial to mesenchymal transition through a SMAD-independent signaling pathway through PARD6A phosphorylation and activation. The protein is TGF-beta receptor type-1 (Tgfbr1) of Rattus norvegicus (Rat).